The following is a 209-amino-acid chain: Mitochondrial import inner membrane translocase subunit Tim23 (209 aa).

3 helical membrane passes run 73–93, 125–145, and 181–197; these read FELA…FGAL, ALWA…GVII, and GLAG…YNNW.

It belongs to the Tim17/Tim22/Tim23 family. As to quaternary structure, component of the TIM23 complex at least composed of TIMM23, TIMM17 (TIMM17A or TIMM17B) and TIMM50; within this complex, directly interacts with TIMM50. The complex interacts with the TIMM44 component of the PAM complex and with DNAJC15. Upon mitochondrial depolarization, interacts with PINK1; the interaction is required for PINK1 accumulation at the outer mitochondrial membrane, kinase activation by autophosphorylation and PRKN recruitement to mitochondria.

Its subcellular location is the mitochondrion inner membrane. Functionally, essential component of the TIM23 complex, a complex that mediates the translocation of transit peptide-containing proteins across the mitochondrial inner membrane. Has a role in the activation of stress-induced mitophagy by protecting PINK1 from OMA1-mediated degradation and facilitating its accumulation at the outer mitochondrial membrane in response to depolarization. This Rattus norvegicus (Rat) protein is Mitochondrial import inner membrane translocase subunit Tim23 (Timm23).